The primary structure comprises 260 residues: ATP synthase subunit a (260 aa).

6 consecutive transmembrane segments (helical) span residues 37–57, 95–115, 125–145, 154–174, 191–211, and 233–253; these read FTNA…FMTL, FFPF…IGMF, IVVT…TGFV, VFVP…IEII, MLAG…FMTM, and EFLV…MYLH.

Belongs to the ATPase A chain family. As to quaternary structure, F-type ATPases have 2 components, CF(1) - the catalytic core - and CF(0) - the membrane proton channel. CF(1) has five subunits: alpha(3), beta(3), gamma(1), delta(1), epsilon(1). CF(0) has three main subunits: a(1), b(2) and c(9-12). The alpha and beta chains form an alternating ring which encloses part of the gamma chain. CF(1) is attached to CF(0) by a central stalk formed by the gamma and epsilon chains, while a peripheral stalk is formed by the delta and b chains.

The protein localises to the cell inner membrane. Key component of the proton channel; it plays a direct role in the translocation of protons across the membrane. The protein is ATP synthase subunit a of Parvibaculum lavamentivorans (strain DS-1 / DSM 13023 / NCIMB 13966).